The primary structure comprises 546 residues: Chaperonin GroEL (546 aa).

Residues 29-32 (TLGP), lysine 50, 86-90 (DGTTT), glycine 414, 477-479 (NAL), and aspartate 493 contribute to the ATP site.

This sequence belongs to the chaperonin (HSP60) family. As to quaternary structure, forms a cylinder of 14 subunits composed of two heptameric rings stacked back-to-back. Interacts with the co-chaperonin GroES.

It localises to the cytoplasm. The enzyme catalyses ATP + H2O + a folded polypeptide = ADP + phosphate + an unfolded polypeptide.. Together with its co-chaperonin GroES, plays an essential role in assisting protein folding. The GroEL-GroES system forms a nano-cage that allows encapsulation of the non-native substrate proteins and provides a physical environment optimized to promote and accelerate protein folding. In Leptospira interrogans serogroup Icterohaemorrhagiae serovar Lai (strain 56601), this protein is Chaperonin GroEL.